A 249-amino-acid chain; its full sequence is Enolase-phosphatase E1 (249 aa).

It belongs to the HAD-like hydrolase superfamily. MasA/MtnC family. In terms of assembly, monomer. Mg(2+) serves as cofactor.

It carries out the reaction 5-methylsulfanyl-2,3-dioxopentyl phosphate + H2O = 1,2-dihydroxy-5-(methylsulfanyl)pent-1-en-3-one + phosphate. The protein operates within amino-acid biosynthesis; L-methionine biosynthesis via salvage pathway; L-methionine from S-methyl-5-thio-alpha-D-ribose 1-phosphate: step 3/6. It participates in amino-acid biosynthesis; L-methionine biosynthesis via salvage pathway; L-methionine from S-methyl-5-thio-alpha-D-ribose 1-phosphate: step 4/6. Functionally, bifunctional enzyme that catalyzes the enolization of 2,3-diketo-5-methylthiopentyl-1-phosphate (DK-MTP-1-P) into the intermediate 2-hydroxy-3-keto-5-methylthiopentenyl-1-phosphate (HK-MTPenyl-1-P), which is then dephosphorylated to form the acireductone 1,2-dihydroxy-3-keto-5-methylthiopentene (DHK-MTPene). The polypeptide is Enolase-phosphatase E1 (Synechococcus sp. (strain RCC307)).